Here is a 437-residue protein sequence, read N- to C-terminus: MPRLFGTDGVRGLANGETITADLALRLAQAAAHVLGQDARDPRVSGEFIAAAVAAGLASSGVDVFDAGVIPTPATAYLIADFDADFGVMISASHNPAPDNGIKFFAAGGRKLADELEDRIEAQLSRPVLLPTGADVGRIRRFADAEDRYVLHLLGTLQHRLDGIHVVLDCAHGAAAGISPEVFTDAGARVTVIGNDPDGMNINDRVGSTHLDLLAEAVLAHGADVGIAHDGDADRCLAVDHTGAIIDGDQIMAVLALSMARRGLLAERTLVATVMSNLGLRIAMAENDITVMQTRVGDRYVLEAMNEGGYSLGGEQSGHLVIAEHATTGDGILTGIQLLGEMAATGKSLHELASVMTVYPQVMINVRGVDRDRVGDDAELNAAVARAEAELGDTGRILMRASGTEPMIRVMVEAADQATAERHAEELAALVTERLAI.

S93 functions as the Phosphoserine intermediate in the catalytic mechanism. The Mg(2+) site is built by S93, D230, D232, and D234. Residue S93 is modified to Phosphoserine.

Belongs to the phosphohexose mutase family. It depends on Mg(2+) as a cofactor. Activated by phosphorylation.

It catalyses the reaction alpha-D-glucosamine 1-phosphate = D-glucosamine 6-phosphate. Catalyzes the conversion of glucosamine-6-phosphate to glucosamine-1-phosphate. This Clavibacter michiganensis subsp. michiganensis (strain NCPPB 382) protein is Phosphoglucosamine mutase.